The sequence spans 365 residues: Outer membrane lipoprotein A (365 aa).

The N-terminal stretch at 1-19 is a signal peptide; it reads MNIATKLMASLVASVVLTA. Residues 19 to 121 are disordered; that stretch reads ACSGGGSSGS…KGEELSKDKS (103 aa). C20 carries N-palmitoyl cysteine lipidation. A lipid anchor (S-diacylglycerol cysteine) is attached at C20. Composition is skewed to basic and acidic residues over residues 48-68 and 105-121; these read EQPK…EPKE and NPQK…KDKS.

It localises to the cell outer membrane. The chain is Outer membrane lipoprotein A (omlA) from Actinobacillus pleuropneumoniae (Haemophilus pleuropneumoniae).